The following is a 259-amino-acid chain: 5'-nucleotidase SurE (259 aa).

Positions 8, 9, 40, and 92 each coordinate a divalent metal cation.

The protein belongs to the SurE nucleotidase family. A divalent metal cation is required as a cofactor.

It localises to the cytoplasm. The enzyme catalyses a ribonucleoside 5'-phosphate + H2O = a ribonucleoside + phosphate. Functionally, nucleotidase that shows phosphatase activity on nucleoside 5'-monophosphates. The sequence is that of 5'-nucleotidase SurE from Xanthomonas euvesicatoria pv. vesicatoria (strain 85-10) (Xanthomonas campestris pv. vesicatoria).